Reading from the N-terminus, the 569-residue chain is Urease subunit beta (569 aa).

A Urease domain is found at 131–569 (GGIDTHIHFI…LSLAQLYNLF (439 aa)). Histidine 136, histidine 138, and lysine 219 together coordinate Ni(2+). Lysine 219 carries the N6-carboxylysine modification. A substrate-binding site is contributed by histidine 221. The Ni(2+) site is built by histidine 248 and histidine 274. The active-site Proton donor is the histidine 322. Aspartate 362 is a binding site for Ni(2+).

It belongs to the metallo-dependent hydrolases superfamily. Urease alpha subunit family. In terms of assembly, heterohexamer of 3 UreA (alpha) and 3 UreB (beta) subunits. Ni cation serves as cofactor. Carboxylation allows a single lysine to coordinate two nickel ions.

The protein localises to the cytoplasm. It catalyses the reaction urea + 2 H2O + H(+) = hydrogencarbonate + 2 NH4(+). The protein operates within nitrogen metabolism; urea degradation; CO(2) and NH(3) from urea (urease route): step 1/1. The polypeptide is Urease subunit beta (Helicobacter felis (strain ATCC 49179 / CCUG 28539 / NCTC 12436 / CS1)).